Reading from the N-terminus, the 411-residue chain is Multifunctional CCA protein (411 aa).

ATP-binding residues include G8 and R11. CTP contacts are provided by G8 and R11. Mg(2+) contacts are provided by E21 and D23. ATP contacts are provided by R91, R137, and R140. 3 residues coordinate CTP: R91, R137, and R140. The region spanning 228 to 329 (TGVHALLALE…LKTLLALDGL (102 aa)) is the HD domain.

Belongs to the tRNA nucleotidyltransferase/poly(A) polymerase family. Bacterial CCA-adding enzyme type 1 subfamily. As to quaternary structure, monomer. Can also form homodimers and oligomers. It depends on Mg(2+) as a cofactor. The cofactor is Ni(2+).

The catalysed reaction is a tRNA precursor + 2 CTP + ATP = a tRNA with a 3' CCA end + 3 diphosphate. It carries out the reaction a tRNA with a 3' CCA end + 2 CTP + ATP = a tRNA with a 3' CCACCA end + 3 diphosphate. Catalyzes the addition and repair of the essential 3'-terminal CCA sequence in tRNAs without using a nucleic acid template. Adds these three nucleotides in the order of C, C, and A to the tRNA nucleotide-73, using CTP and ATP as substrates and producing inorganic pyrophosphate. tRNA 3'-terminal CCA addition is required both for tRNA processing and repair. Also involved in tRNA surveillance by mediating tandem CCA addition to generate a CCACCA at the 3' terminus of unstable tRNAs. While stable tRNAs receive only 3'-terminal CCA, unstable tRNAs are marked with CCACCA and rapidly degraded. In Teredinibacter turnerae (strain ATCC 39867 / T7901), this protein is Multifunctional CCA protein.